A 1221-amino-acid polypeptide reads, in one-letter code: MIDNILQFFLKNVPQDKTYEINNLQDANHLIIRNTRTGTRRLFEYVNNFQQFLNTIRNNFNGPCAKHDMGASCEDTEEPAEKHAAQTLDGHDWVLESNDFCIFVKPFILKKHYDIIQKYINFEDFFKSTDPGYINKCVQAGDYYYWPNWPKKQAFSFNGWQLFLNIKFGIVIEPTIPIIHNKKLGPVDLFVFDPKCFLNVELSLRTNHDPPQTLFVNGKTKFDDSHEDLFILKMADGTVATCKVNGELVNSDKNFFNYIRDDINLEECITVPKYKHIVNVNLKSLRVFENNNFDKNDVDLSDTRSRKPRIVPIISASSENADYIQTQINLGLIAIHENMVKVLATHERANDPNLLQQYFEKSKFKNFDFLIYVLWKILTKNENFSYRETDIKLFLELLCESLFACDKEALNEALKRCEPYKKQEKIVFNRACNHWFDFDDTKLCVSLGYYFGIHYMIYLTQSAKNEILDHDELWAYTYENVMALNLPPDIVCKGFFRKLENVVTGVNLVFNGKHYQIVKKEDDLFKLTKSNCYKLSNIKFNNWKYLYLTTHGVYNVFTNSFHSSCPFLLGTTLPQTFKKPTDEKYLPEDAFNYMLSTSADELSIYRTYHIAKMCRDVKMLKTNTAIVNYMGNCNTCQADMRVALNNLFRDLWNLDDENLITLALYVNKNRVSDMLHNLKCKPCRSTVSGSRPKCKCYKKIKINRKALKVCLMADMFGNDAELSELIWMLIFTNKTYVSTTLIRTNSEFVNQHGEFFSKEHNKIIQYLYRTIHKIEYVDMLMDKFNDKRLFLTELRDDVAREPDVQFEESDNISKFYTHHADALMILKKYNVWWDKIILARSTDDLPTWLTRFYMRIIMSKVDLKEYSYNYLKKIVEGYLYFKRFTNFNHANAIMLMHFAASLAIPVDYGKKAIYMPGEPGSGKSSFFELLDYLVLMHKFDDDNHSGESNKETSDKEVSKLNSQLYTINELKQCSESYFKKHADSSKSDSKSRKYQGLLKYEANYKMLIVNNKPLYVDDYDDGVQDRFLIVYTNHKFVDSVKFAGSVYEHIKSKQFPIESMYYESLVTPVRLFLSHVLMYRRDPKTGFVVYKTLLSNDPMHKHNLMCLSTNNSPLYALIYILNIKTVRSATITIGEDKMEEMIGIAVQHFKNFLHPSFVQYNYKKNINASSSKSFVFNEQVLLQQIKNKFKNNYNKTTNVFYNMTMALNRNDLNTSVPNFVC.

Residues 692–701 (PKCKCYKKIK) carry the Nuclear localization signal motif. ATP is bound at residue 917 to 924 (GEPGSGKS). Positions 967-981 (INELKQCSESYFKKH) form a DNA-binding region, H-T-H motif.

As to quaternary structure, interacts with IE1 and LEF-3.

The protein resides in the host nucleus. The enzyme catalyses ATP + H2O = ADP + phosphate + H(+). Essential for initiation of viral DNA replication, it may contribute to other functions such as controlling the switch to the late phase and leading to the inhibition of host protein synthesis. Required for late and very late gene expression. The protein is DNA replication helicase (HELI) of Lepidoptera (butterflies and moths).